Here is a 342-residue protein sequence, read N- to C-terminus: Holliday junction branch migration complex subunit RuvB (342 aa).

The interval 1–185 is large ATPase domain (RuvB-L); it reads MTVKPLRDVT…FPIQERLEYY (185 aa). Residues Leu-24, Arg-25, Gly-66, Lys-69, Thr-70, Ser-71, 132–134, Arg-175, Tyr-185, and Arg-222 contribute to the ATP site; that span reads EDY. Thr-70 serves as a coordination point for Mg(2+). A small ATPAse domain (RuvB-S) region spans residues 186–256; that stretch reads GPAELKEIAV…VVDRTLRRLE (71 aa). The segment at 259–342 is head domain (RuvB-H); it reads ARGLDAMDRR…RPGGKQGSLV (84 aa). Positions 314 and 319 each coordinate DNA.

Belongs to the RuvB family. Homohexamer. Forms an RuvA(8)-RuvB(12)-Holliday junction (HJ) complex. HJ DNA is sandwiched between 2 RuvA tetramers; dsDNA enters through RuvA and exits via RuvB. An RuvB hexamer assembles on each DNA strand where it exits the tetramer. Each RuvB hexamer is contacted by two RuvA subunits (via domain III) on 2 adjacent RuvB subunits; this complex drives branch migration. In the full resolvosome a probable DNA-RuvA(4)-RuvB(12)-RuvC(2) complex forms which resolves the HJ.

It is found in the cytoplasm. The enzyme catalyses ATP + H2O = ADP + phosphate + H(+). In terms of biological role, the RuvA-RuvB-RuvC complex processes Holliday junction (HJ) DNA during genetic recombination and DNA repair, while the RuvA-RuvB complex plays an important role in the rescue of blocked DNA replication forks via replication fork reversal (RFR). RuvA specifically binds to HJ cruciform DNA, conferring on it an open structure. The RuvB hexamer acts as an ATP-dependent pump, pulling dsDNA into and through the RuvAB complex. RuvB forms 2 homohexamers on either side of HJ DNA bound by 1 or 2 RuvA tetramers; 4 subunits per hexamer contact DNA at a time. Coordinated motions by a converter formed by DNA-disengaged RuvB subunits stimulates ATP hydrolysis and nucleotide exchange. Immobilization of the converter enables RuvB to convert the ATP-contained energy into a lever motion, pulling 2 nucleotides of DNA out of the RuvA tetramer per ATP hydrolyzed, thus driving DNA branch migration. The RuvB motors rotate together with the DNA substrate, which together with the progressing nucleotide cycle form the mechanistic basis for DNA recombination by continuous HJ branch migration. Branch migration allows RuvC to scan DNA until it finds its consensus sequence, where it cleaves and resolves cruciform DNA. This chain is Holliday junction branch migration complex subunit RuvB, found in Anaeromyxobacter sp. (strain K).